Reading from the N-terminus, the 36-residue chain is Pancreatic polypeptide (36 aa).

Residue Tyr-36 is modified to Tyrosine amide.

The protein belongs to the NPY family.

The protein localises to the secreted. Hormone secreted by pancreatic cells that acts as a regulator of pancreatic and gastrointestinal functions. This Larus argentatus (Herring gull) protein is Pancreatic polypeptide (PPY).